Reading from the N-terminus, the 130-residue chain is MVRMNVLADALRSICNAEKRCKRQVLIRPCSKVTVKFLMVMMKHGYIGEFEIVDDHRGGKIIVNLNGRLNKCGVISPRFDVPINEMEKWTSNLLPSRQFGYVVLTTSGGIMDHEEARRKHVGGKILGFFF.

This sequence belongs to the universal ribosomal protein uS8 family.

The chain is Small ribosomal subunit protein uS8 (RPS15A) from Strongylocentrotus purpuratus (Purple sea urchin).